A 505-amino-acid polypeptide reads, in one-letter code: Protein DETOXIFICATION 50 (505 aa).

The next 12 membrane-spanning stretches (helical) occupy residues 46–66, 78–98, 121–141, 155–175, 194–214, 219–239, 275–295, 305–325, 344–364, 380–400, 424–444, and 446–466; these read LVLTGLFLYVRSFVSLSFLGG, AAAFANITGYSLFSGLTMGVE, IILLLVTSLPVTLLWMNMEKI, AHIFLLYSVPDLVAQSFLHPL, IASFLHLPITFFLVSYLGLGI, LSGVVSNFNLVAFLFLYICFF, ISVCLEWWCYEIMILLCGFLL, GILIQITSLVYIFPHSLSLGV, AAIVGLGLSIALGFTAFAFTV, IMKLTAMALPIVGLCELGNCP, AFYAVGIPVGAVLAFWFGFGF, and GLWLGMLAAQITCVIGMMAAT.

This sequence belongs to the multi antimicrobial extrusion (MATE) (TC 2.A.66.1) family. As to expression, preferentially expressed in rosette leaves. Detected mainly in the vascular tissues and guard cells. Mostly detected at reproductive stages in young anthers, in mature pollens and during pollen germination on the pistil. Also expressed in developing seeds.

It localises to the cell membrane. Its subcellular location is the late endosome membrane. Functionally, functions as a multidrug and toxin extrusion transporter in the export of abscisic acid (ABA) in guard cells. Plays a role in ABA-mediated growth inhibition and responses to drought conditions. May act as a negative regulator of hypocotyl cell elongation in the light. This is Protein DETOXIFICATION 50 from Arabidopsis thaliana (Mouse-ear cress).